The chain runs to 364 residues: Formimidoylglutamase (364 aa).

Residues His-133, Asp-189, His-191, Asp-193, Asp-286, and Asp-288 each contribute to the Mn(2+) site.

It belongs to the arginase family. Requires Mn(2+) as cofactor.

It carries out the reaction N-formimidoyl-L-glutamate + H2O = formamide + L-glutamate. Its pathway is amino-acid degradation; L-histidine degradation into L-glutamate; L-glutamate from N-formimidoyl-L-glutamate (hydrolase route): step 1/1. Its function is as follows. Catalyzes the conversion of N-formimidoyl-L-glutamate to L-glutamate and formamide. The sequence is that of Formimidoylglutamase from Photobacterium profundum (strain SS9).